A 217-amino-acid polypeptide reads, in one-letter code: Thiamine-phosphate synthase (217 aa).

4-amino-2-methyl-5-(diphosphooxymethyl)pyrimidine contacts are provided by residues 42–46 (QFRDK) and aspartate 77. Positions 78 and 97 each coordinate Mg(2+). Residue serine 117 participates in 4-amino-2-methyl-5-(diphosphooxymethyl)pyrimidine binding. Position 144 to 146 (144 to 146 (TIS)) interacts with 2-[(2R,5Z)-2-carboxy-4-methylthiazol-5(2H)-ylidene]ethyl phosphate. Lysine 147 lines the 4-amino-2-methyl-5-(diphosphooxymethyl)pyrimidine pocket. Residues glycine 175 and 195 to 196 (IT) contribute to the 2-[(2R,5Z)-2-carboxy-4-methylthiazol-5(2H)-ylidene]ethyl phosphate site.

It belongs to the thiamine-phosphate synthase family. Requires Mg(2+) as cofactor.

The enzyme catalyses 2-[(2R,5Z)-2-carboxy-4-methylthiazol-5(2H)-ylidene]ethyl phosphate + 4-amino-2-methyl-5-(diphosphooxymethyl)pyrimidine + 2 H(+) = thiamine phosphate + CO2 + diphosphate. It carries out the reaction 2-(2-carboxy-4-methylthiazol-5-yl)ethyl phosphate + 4-amino-2-methyl-5-(diphosphooxymethyl)pyrimidine + 2 H(+) = thiamine phosphate + CO2 + diphosphate. The catalysed reaction is 4-methyl-5-(2-phosphooxyethyl)-thiazole + 4-amino-2-methyl-5-(diphosphooxymethyl)pyrimidine + H(+) = thiamine phosphate + diphosphate. The protein operates within cofactor biosynthesis; thiamine diphosphate biosynthesis; thiamine phosphate from 4-amino-2-methyl-5-diphosphomethylpyrimidine and 4-methyl-5-(2-phosphoethyl)-thiazole: step 1/1. In terms of biological role, condenses 4-methyl-5-(beta-hydroxyethyl)thiazole monophosphate (THZ-P) and 2-methyl-4-amino-5-hydroxymethyl pyrimidine pyrophosphate (HMP-PP) to form thiamine monophosphate (TMP). The sequence is that of Thiamine-phosphate synthase from Levilactobacillus brevis (strain ATCC 367 / BCRC 12310 / CIP 105137 / JCM 1170 / LMG 11437 / NCIMB 947 / NCTC 947) (Lactobacillus brevis).